Consider the following 233-residue polypeptide: Hydroxyacylglutathione hydrolase (233 aa).

Positions 52, 54, 56, 57, 108, 125, and 163 each coordinate Zn(2+).

This sequence belongs to the metallo-beta-lactamase superfamily. Glyoxalase II family. As to quaternary structure, monomer. Requires Zn(2+) as cofactor.

The catalysed reaction is an S-(2-hydroxyacyl)glutathione + H2O = a 2-hydroxy carboxylate + glutathione + H(+). It participates in secondary metabolite metabolism; methylglyoxal degradation; (R)-lactate from methylglyoxal: step 2/2. Thiolesterase that catalyzes the hydrolysis of S-D-lactoyl-glutathione to form glutathione and D-lactic acid. In Histophilus somni (strain 129Pt) (Haemophilus somnus), this protein is Hydroxyacylglutathione hydrolase.